A 322-amino-acid chain; its full sequence is CMP-sialic acid transporter 1 (322 aa).

Residues 1–2 (MQ) lie on the Cytoplasmic side of the membrane. The helical transmembrane segment at 3 to 23 (WYLVAALLTVLTSSQGILTTL) threads the bilayer. The Lumenal segment spans residues 24 to 33 (SQSNGKYKYD). The chain crosses the membrane as a helical span at residues 34–54 (YATIPFLAELFKLSFSSFFLW). Over 55 to 75 (KECQSSSPPRMTKEWRSIRLY) the chain is Cytoplasmic. A helical transmembrane segment spans residues 76–96 (LVPSVIYLIHNNVQFATLTYV). The Lumenal segment spans residues 97 to 100 (DPST). The chain crosses the membrane as a helical span at residues 101 to 120 (YQIMGNLKIVTTGILFRLVL). The Cytoplasmic portion of the chain corresponds to 121–126 (KRKLSN). The chain crosses the membrane as a helical span at residues 127 to 144 (LQWMAVVLLAVGTTTSQV). The Lumenal portion of the chain corresponds to 145 to 157 (KGCGDAPCDSLFS). A helical transmembrane segment spans residues 158-178 (APFQGYMLGILSACLSALAGV). Topologically, residues 179–198 (YTEYLMKKNNDSLYWQNVQL) are cytoplasmic. A helical membrane pass occupies residues 199–219 (YTFGVIFNMGWLIYGDFKAGF). Residues 220–233 (ERGPWWQRLFNGYS) lie on the Lumenal side of the membrane. The helical transmembrane segment at 234 to 254 (ITTWMVVFNLGSTGLLVSWLM) threads the bilayer. The Cytoplasmic segment spans residues 255 to 262 (KYSDNIVK). Residues 263–283 (VYSTSMAMLLTMVLSVYLFNV) traverse the membrane as a helical segment. Topologically, residues 284–286 (RAT) are lumenal.

It belongs to the nucleotide-sugar transporter family. CMP-Sialate:CMP antiporter (TC 2.A.7.12) subfamily. In terms of tissue distribution, expressed in roots, leaves and stalks.

Its subcellular location is the golgi apparatus membrane. Functionally, sugar transporter involved in the transport of CMP-sialic acid from the cytoplasm into the Golgi. May transport important nucleotide sugars such as CMP-Kdo (2-keto-3-deoxy-D-manno-octulosonic acid) in physiological conditions. The chain is CMP-sialic acid transporter 1 from Oryza sativa subsp. japonica (Rice).